The sequence spans 821 residues: Leucine--tRNA ligase (821 aa).

Residues 40–50 carry the 'HIGH' region motif; the sequence is PYPSGRIHMGH. The short motif at 586–590 is the 'KMSKS' region element; it reads KMSKS. Residue Lys-589 coordinates ATP.

Belongs to the class-I aminoacyl-tRNA synthetase family.

Its subcellular location is the cytoplasm. It carries out the reaction tRNA(Leu) + L-leucine + ATP = L-leucyl-tRNA(Leu) + AMP + diphosphate. The sequence is that of Leucine--tRNA ligase from Aliarcobacter butzleri (strain RM4018) (Arcobacter butzleri).